We begin with the raw amino-acid sequence, 392 residues long: THO complex subunit MFT1 (392 aa).

2 stretches are compositionally biased toward acidic residues: residues 258-271 and 290-330; these read DNID…EDEE and NVDE…EVDG. A disordered region spans residues 258 to 392; sequence DNIDEDYESD…SASSSVEEVK (135 aa). Residue serine 266 is modified to Phosphoserine. The span at 331 to 344 shows a compositional bias: polar residues; sequence ESSQQEDNSRQGNN. Residues 345–367 show a composition bias toward acidic residues; that stretch reads EETDKETGVIEEPDAVNDAEEAD. The span at 377–392 shows a compositional bias: polar residues; the sequence is GTTSDFSASSSVEEVK.

Component of the THO complex, which is composed of HPR1, MFT1, THO2 and THP2. Together with SUB2, TEX1 and YRA1, THO forms the transcription/export (TREX) complex. THO associates with DNA and RNA in vitro.

Its subcellular location is the nucleus. Its function is as follows. Component the THO subcomplex of the TREX complex, which operates in coupling transcription elongation to mRNA export. The THO complex is recruited to transcribed genes and moves along the gene with the elongating polymerase during transcription. THO is important for stabilizing nascent RNA in the RNA polymerase II elongation complex by preventing formation of DNA:RNA hybrids behind the elongating polymerase. It functions in cotranscriptional formation of an export-competent messenger ribonucleoprotein particle (mRNP) by facilitating the loading of ATP-dependent RNA helicase SUB2 and the mRNA export factor YRA1 along the nascent mRNA. This chain is THO complex subunit MFT1 (MFT1), found in Saccharomyces cerevisiae (strain ATCC 204508 / S288c) (Baker's yeast).